The primary structure comprises 330 residues: DNA-directed RNA polymerase subunit alpha (330 aa).

Positions 1–231 are alpha N-terminal domain (alpha-NTD); sequence MQTNLLKPKT…EQLAVFAQLE (231 aa). The alpha C-terminal domain (alpha-CTD) stretch occupies residues 250–330; sequence FDPILLRPVD…SWPPAGLDKR (81 aa).

It belongs to the RNA polymerase alpha chain family. As to quaternary structure, homodimer. The RNAP catalytic core consists of 2 alpha, 1 beta, 1 beta' and 1 omega subunit. When a sigma factor is associated with the core the holoenzyme is formed, which can initiate transcription.

The catalysed reaction is RNA(n) + a ribonucleoside 5'-triphosphate = RNA(n+1) + diphosphate. Functionally, DNA-dependent RNA polymerase catalyzes the transcription of DNA into RNA using the four ribonucleoside triphosphates as substrates. The protein is DNA-directed RNA polymerase subunit alpha of Polaromonas naphthalenivorans (strain CJ2).